Reading from the N-terminus, the 176-residue chain is Peptide deformylase (176 aa).

Cysteine 92 and histidine 134 together coordinate Fe cation. Glutamate 135 is a catalytic residue. Histidine 138 lines the Fe cation pocket.

It belongs to the polypeptide deformylase family. It depends on Fe(2+) as a cofactor.

It carries out the reaction N-terminal N-formyl-L-methionyl-[peptide] + H2O = N-terminal L-methionyl-[peptide] + formate. Removes the formyl group from the N-terminal Met of newly synthesized proteins. Requires at least a dipeptide for an efficient rate of reaction. N-terminal L-methionine is a prerequisite for activity but the enzyme has broad specificity at other positions. In Acinetobacter baumannii (strain SDF), this protein is Peptide deformylase.